Here is a 227-residue protein sequence, read N- to C-terminus: UPF0758 protein Dred_2549 (227 aa).

Residues isoleucine 105–isoleucine 227 enclose the MPN domain. Zn(2+)-binding residues include histidine 176, histidine 178, and aspartate 189. Positions histidine 176 to aspartate 189 match the JAMM motif motif.

Belongs to the UPF0758 family.

This Desulforamulus reducens (strain ATCC BAA-1160 / DSM 100696 / MI-1) (Desulfotomaculum reducens) protein is UPF0758 protein Dred_2549.